We begin with the raw amino-acid sequence, 204 residues long: Photosystem I reaction center subunit II-2, chloroplastic (204 aa).

Residues 1–44 constitute a chloroplast transit peptide; sequence MATQAAGIFSPAITTTTSAVKKLHLFSSSHRPKSLSFTKTAIRA. Thr47 carries the phosphothreonine modification. Positions 47 to 71 are disordered; that stretch reads TESSSAAPAVKEAPVGFTPPQLDPN. Residues 137–145 form a ferredoxin and ferredoxin-oxidoreductase binding region; it reads RLRSKYKIT.

This sequence belongs to the PsaD family. In terms of assembly, interacts with CURT1C.

The protein localises to the plastid. Its subcellular location is the chloroplast thylakoid membrane. Its function is as follows. PSAD can form complexes with ferredoxin and ferredoxin-oxidoreductase in photosystem I (PS I) reaction center. PSAD may encode the ferredoxin-docking protein. In Arabidopsis thaliana (Mouse-ear cress), this protein is Photosystem I reaction center subunit II-2, chloroplastic (PSAD2).